The following is a 246-amino-acid chain: Bis(5'-nucleosyl)-tetraphosphatase PrpE [asymmetrical] (246 aa).

It belongs to the PrpE family. The cofactor is Ni(2+).

The enzyme catalyses P(1),P(4)-bis(5'-guanosyl) tetraphosphate + H2O = GMP + GTP + 2 H(+). Functionally, asymmetrically hydrolyzes Ap4p to yield AMP and ATP. The polypeptide is Bis(5'-nucleosyl)-tetraphosphatase PrpE [asymmetrical] (Bacillus thuringiensis subsp. konkukian (strain 97-27)).